We begin with the raw amino-acid sequence, 77 residues long: U10-lycotoxin-Ls1d (77 aa).

The signal sequence occupies residues 1–20 (MKLIIFTGLFLFAIVSLIEA). Positions 21–26 (EEESGR) are excised as a propeptide.

This sequence belongs to the neurotoxin 19 (CSTX) family. 09 (U10-Lctx) subfamily. Contains 4 disulfide bonds. Expressed by the venom gland.

The protein localises to the secreted. This chain is U10-lycotoxin-Ls1d, found in Lycosa singoriensis (Wolf spider).